A 540-amino-acid polypeptide reads, in one-letter code: Beta-secretase (540 aa).

A signal peptide spans 1 to 31 (MHFSLPTSRIVVVVPAAAICIVCVLIETCTA). The region spanning 81–435 (YYIEVDIGTP…DRENKRVGFA (355 aa)) is the Peptidase A1 domain. Residues Asp99 and Asp302 contribute to the active site. Cystine bridges form between Cys222–Cys439, Cys291–Cys469, and Cys345–Cys397. A helical membrane pass occupies residues 483 to 503 (ITAYVLAAICLVCLIPVIVFA). At 504–540 (LTHQINKRCKGRRGRGVVNHHRLDQEGLAENEPNSDP) the chain is on the cytoplasmic side.

This sequence belongs to the peptidase A1 family.

The protein localises to the membrane. The sequence is that of Beta-secretase from Strongylocentrotus purpuratus (Purple sea urchin).